The following is a 459-amino-acid chain: Elongation factor 1-alpha 1 (459 aa).

A tr-type G domain is found at lysine 5–threonine 242. Residues glycine 14–serine 21 form a G1 region. The tract at residues glycine 70–aspartate 74 is G2. The tract at residues aspartate 91–glycine 94 is G3. The tract at residues asparagine 153 to aspartate 156 is G4. Residues serine 194–phenylalanine 196 are G5. Glutamate 301 and glutamate 374 each carry 5-glutamyl glycerylphosphorylethanolamine.

Belongs to the TRAFAC class translation factor GTPase superfamily. Classic translation factor GTPase family. EF-Tu/EF-1A subfamily.

It localises to the cytoplasm. This protein promotes the GTP-dependent binding of aminoacyl-tRNA to the A-site of ribosomes during protein biosynthesis. This Oscheius tipulae protein is Elongation factor 1-alpha 1 (eft-1).